We begin with the raw amino-acid sequence, 356 residues long: Phosphoribosylformylglycinamidine cyclo-ligase (356 aa).

It belongs to the AIR synthase family.

The protein localises to the cytoplasm. It carries out the reaction 2-formamido-N(1)-(5-O-phospho-beta-D-ribosyl)acetamidine + ATP = 5-amino-1-(5-phospho-beta-D-ribosyl)imidazole + ADP + phosphate + H(+). It participates in purine metabolism; IMP biosynthesis via de novo pathway; 5-amino-1-(5-phospho-D-ribosyl)imidazole from N(2)-formyl-N(1)-(5-phospho-D-ribosyl)glycinamide: step 2/2. This Acinetobacter baylyi (strain ATCC 33305 / BD413 / ADP1) protein is Phosphoribosylformylglycinamidine cyclo-ligase.